The chain runs to 40 residues: Photosystem II reaction center protein J (40 aa).

A helical transmembrane segment spans residues 10–30; that stretch reads LWLVGTVAGTLVIGLLGVFFY.

It belongs to the PsbJ family. In terms of assembly, PSII is composed of 1 copy each of membrane proteins PsbA, PsbB, PsbC, PsbD, PsbE, PsbF, PsbH, PsbI, PsbJ, PsbK, PsbL, PsbM, PsbT, PsbX, PsbY, PsbZ, Psb30/Ycf12, at least 3 peripheral proteins of the oxygen-evolving complex and a large number of cofactors. It forms dimeric complexes.

The protein localises to the plastid. It localises to the chloroplast thylakoid membrane. One of the components of the core complex of photosystem II (PSII). PSII is a light-driven water:plastoquinone oxidoreductase that uses light energy to abstract electrons from H(2)O, generating O(2) and a proton gradient subsequently used for ATP formation. It consists of a core antenna complex that captures photons, and an electron transfer chain that converts photonic excitation into a charge separation. This Adiantum capillus-veneris (Maidenhair fern) protein is Photosystem II reaction center protein J.